Here is a 304-residue protein sequence, read N- to C-terminus: CRISPR-associated endonuclease Cas1 (304 aa).

Glutamate 148, histidine 204, and glutamate 219 together coordinate Mn(2+).

The protein belongs to the CRISPR-associated endonuclease Cas1 family. In terms of assembly, homodimer, forms a heterotetramer with a Cas2 homodimer. The cofactor is Mg(2+). Requires Mn(2+) as cofactor.

Functionally, CRISPR (clustered regularly interspaced short palindromic repeat), is an adaptive immune system that provides protection against mobile genetic elements (viruses, transposable elements and conjugative plasmids). CRISPR clusters contain spacers, sequences complementary to antecedent mobile elements, and target invading nucleic acids. CRISPR clusters are transcribed and processed into CRISPR RNA (crRNA). Acts as a dsDNA endonuclease. Involved in the integration of spacer DNA into the CRISPR cassette. The chain is CRISPR-associated endonuclease Cas1 from Neisseria meningitidis serogroup C (strain 8013).